Consider the following 857-residue polypeptide: Bifunctional levopimaradiene synthase, chloroplastic (857 aa).

A chloroplast-targeting transit peptide spans 1-33 (MALPSSSLSSQIHTGATTQCIPHFHGSLNAGTS). K257 lines the substrate pocket. Mg(2+)-binding residues include D390 and D392. The short motif at 390–393 (DIDD) is the DXDD motif element. K477 contributes to the substrate binding site. Mg(2+)-binding residues include D609, D613, N753, T757, and E761. The DDXXD motif motif lies at 609 to 613 (DDLYD).

This sequence belongs to the terpene synthase family. Tpsd subfamily. Mg(2+) serves as cofactor.

It localises to the plastid. The protein localises to the chloroplast. The catalysed reaction is (2E,6E,10E)-geranylgeranyl diphosphate = (+)-copalyl diphosphate. It carries out the reaction (+)-copalyl diphosphate = abieta-7,13-diene + diphosphate. The enzyme catalyses (+)-copalyl diphosphate = abieta-8(14),12-diene + diphosphate. It catalyses the reaction (+)-copalyl diphosphate = neoabietadiene + diphosphate. Its pathway is terpene metabolism; oleoresin biosynthesis. Involved in defensive oleoresin formation in conifers in response to insect attack or other injury. Involved in diterpene (C20) olefins biosynthesis. Bifunctional enzyme that catalyzes two sequential cyclizations of geranylgeranyl diphosphate (GGPP) to levopimaradiene. Levopimaradiene is the major products of the enzyme with abietadiene and neoabietadiene. No activity with farnesyl diphosphate (FPP) as substrate. The protein is Bifunctional levopimaradiene synthase, chloroplastic of Pinus banksiana (Jack pine).